The following is a 558-amino-acid chain: Germacrene A synthase short form (558 aa).

Mg(2+)-binding residues include D311, D315, D455, T459, and E463. The short motif at 311-315 (DDTYD) is the DDXXD motif element.

This sequence belongs to the terpene synthase family. Mg(2+) serves as cofactor. As to expression, expressed in roots and in green and etiolated seedlings.

It catalyses the reaction (2E,6E)-farnesyl diphosphate = (+)-(R)-germacrene A + diphosphate. Its pathway is secondary metabolite biosynthesis; terpenoid biosynthesis. Involved in sesquiterpene lactone biosynthesis. Produces exclusively (+)-germacrene A. The protein is Germacrene A synthase short form of Cichorium intybus (Chicory).